The sequence spans 1094 residues: MDRFELLGPLPREGTTTVLEASAGTGKTFALAGLVTRYLAETAATLDEMLLITFNRAASRELRERVRGQIVEAVGALQGDAPPSGELVEHLLRGSDAERAQKRSRLRDALANFDAATIATTHEFCGSVLKSLGVAGDNAADVELKESLTDLVTEIVDDRYLANFGRQETDPELTYAEALALALAVVDDPCAQLRPPDPEPGSKAAVRLRFAAEVLEELERRKGRLRAQGFNDLLIRLATALEAADSPARDRMRERWRIVLVDEFQDTDPMQWRVLERAFSRHSALILIGDPKQAIYGFRGGDIHTYLKAAGTADARYTLGVNWRSDRALVESLQTVLRDATLGHADIVVRGTDAHHAGHRLASAPRPAPFRLRVVKRHTLGYDGTAHVPIEALRRHIPDDLAADVAALLASGATFAGRPVVAADIAVIVEHHKDARACRNALAEAGIPAIYTGDTDVFASQAAKDWLCLLEAFDAPQRSGLVRAAACTMFFGETAESLAAEGDALTDRVAGTLREWADHARHRGVAAVFQAAQLAGMGRRVLSQRGGERDLTDLAHIAQLLHEAAHRERLGLPGLRDWLRRQAKAGAGPPEHNRRLDSDAAAVQIMTVFVAKGLQFPIVYLPFAFNRNVRSDDILLYHDDGTRCLYIGGKDGGAQRRTVEGLNRVEAAHDNLRLTYVALTRAQSQVVAWWAPTFDEVNGGLSRLLRGRRPGQSQVPDRCTPRVTDEQAWAVFAQWEAAGGPSVEESVIGARSSLEKPVPVPGFEVRHFHRRIDTTWRRTSYSDLVRGSEAVTVTSEPAAGGRADEVEIAVVAAPGSGADLTSPLAALPSGASFGSLVHAVLETADPAAPDLAAELEAQVRRHAPWWTVDVDHAQLAPELARALLPMHDTPLGPAAAALTLRQIGVRDRLRELDFEMPLAGGDLRGRSPDVSLADVGELLASHLPGDDPLSPYADRLGSAGLGDQPLRGYLAGSIDVVLRLPGQRYLVVDYKTNHLGDTAADYGFERLTEAMLHSDYPLQALLYVVVLHRFLRWRQRDYAPARHLGGVLYLFVRGMCGAATPVTAGHPAGVFTWNPPTALVVALSDLLDRGRLQS.

In terms of domain architecture, UvrD-like helicase ATP-binding spans 1–326 (MDRFELLGPL…YTLGVNWRSD (326 aa)). The segment at 1–713 (MDRFELLGPL…LLRGRRPGQS (713 aa)) is DNA-binding and helicase activity, interacts with RecC. 21–28 (ASAGTGKT) lines the ATP pocket. Residues 357-613 (AGHRLASAPR…QIMTVFVAKG (257 aa)) form the UvrD-like helicase C-terminal domain. The interval 775-1094 (TWRRTSYSDL…DLLDRGRLQS (320 aa)) is nuclease activity, interacts with RecD and RecA. Residues H838, D975, and D989 each coordinate Mg(2+). Catalysis depends on D989, which acts as the For nuclease activity.

This sequence belongs to the helicase family. UvrD subfamily. Heterotrimer of RecB, RecC and RecD. All subunits contribute to DNA-binding. Interacts with RecA. Mg(2+) serves as cofactor.

The catalysed reaction is Exonucleolytic cleavage (in the presence of ATP) in either 5'- to 3'- or 3'- to 5'-direction to yield 5'-phosphooligonucleotides.. It carries out the reaction Couples ATP hydrolysis with the unwinding of duplex DNA by translocating in the 3'-5' direction.. It catalyses the reaction ATP + H2O = ADP + phosphate + H(+). Functionally, a helicase/nuclease that prepares dsDNA breaks (DSB) for recombinational DNA repair. Binds to DSBs and unwinds DNA via a highly rapid and processive ATP-dependent bidirectional helicase activity. In the holoenzyme this subunit contributes ATPase, 3'-5' helicase, exonuclease activity and loads RecA onto ssDNA. Unlike the case in E.coli, suppresses RecA-dependent homologous recombination, is instead required for single-strand annealing pathway repair of DSB. The protein is RecBCD enzyme subunit RecB of Mycobacterium tuberculosis (strain CDC 1551 / Oshkosh).